The primary structure comprises 353 residues: MAAHEPVFAARRHNEDTTRESAFVYTNANNTRDPFEGPNYHIAPRWVYNVSSLWMIFVVIASVFTNGLVIVATAKFKKLRHPLNWILVNLAIADLGETVLASTISVINQIFGYFILGHPMCVFEGWTVSVCGITALWSLTIISWERWVVVCKPFGNVKFDGKWAAGGIIFSWVWAIIWCTPPIFGWSRYWPHGLKTSCGPDVFSGSEDPGVASYMITLMLTCCILPLSIIIICYIFVWSAIHQVAQQQKDSESTQKAEKEVSRMVVVMILAFIVCWGPYASFATFSAVNPGYAWHPLAAAMPAYFAKSATIYNPIIYVFMNRQFRSCIMQLFGKKVEDASEVSGSTTEVSTAS.

Over 1 to 47 the chain is Extracellular; the sequence is MAAHEPVFAARRHNEDTTRESAFVYTNANNTRDPFEGPNYHIAPRWV. N-linked (GlcNAc...) asparagine glycosylation is present at Asn-29. A helical transmembrane segment spans residues 48-72; sequence YNVSSLWMIFVVIASVFTNGLVIVA. Topologically, residues 73-84 are cytoplasmic; it reads TAKFKKLRHPLN. Residues 85 to 110 form a helical membrane-spanning segment; it reads WILVNLAIADLGETVLASTISVINQI. Residues 111–124 lie on the Extracellular side of the membrane; the sequence is FGYFILGHPMCVFE. The cysteines at positions 121 and 198 are disulfide-linked. The chain crosses the membrane as a helical span at residues 125 to 144; it reads GWTVSVCGITALWSLTIISW. Residues 145–163 are Cytoplasmic-facing; it reads ERWVVVCKPFGNVKFDGKW. Residues 164–187 form a helical membrane-spanning segment; that stretch reads AAGGIIFSWVWAIIWCTPPIFGWS. The Extracellular portion of the chain corresponds to 188-213; the sequence is RYWPHGLKTSCGPDVFSGSEDPGVAS. The chain crosses the membrane as a helical span at residues 214–241; that stretch reads YMITLMLTCCILPLSIIIICYIFVWSAI. The Cytoplasmic portion of the chain corresponds to 242 to 263; sequence HQVAQQQKDSESTQKAEKEVSR. A helical membrane pass occupies residues 264–287; the sequence is MVVVMILAFIVCWGPYASFATFSA. Residues 288–295 lie on the Extracellular side of the membrane; sequence VNPGYAWH. Residues 296–320 traverse the membrane as a helical segment; it reads PLAAAMPAYFAKSATIYNPIIYVFM. Position 307 is an N6-(retinylidene)lysine (Lys-307). Residues 321–353 lie on the Cytoplasmic side of the membrane; sequence NRQFRSCIMQLFGKKVEDASEVSGSTTEVSTAS.

The protein belongs to the G-protein coupled receptor 1 family. Opsin subfamily. In terms of tissue distribution, the color pigments are found in the cone photoreceptor cells.

It localises to the membrane. Visual pigments are the light-absorbing molecules that mediate vision. They consist of an apoprotein, opsin, covalently linked to cis-retinal. The polypeptide is Green-sensitive opsin-2 (G101) (Psalidodon fasciatus (Banded astyanax)).